Here is a 143-residue protein sequence, read N- to C-terminus: Putative protein FPV235 (143 aa).

The polypeptide is Putative protein FPV235 (Vertebrata (FPV)).